A 564-amino-acid chain; its full sequence is Ribulokinase (564 aa).

It belongs to the ribulokinase family.

It carries out the reaction D-ribulose + ATP = D-ribulose 5-phosphate + ADP + H(+). The enzyme catalyses L-ribulose + ATP = L-ribulose 5-phosphate + ADP + H(+). It functions in the pathway carbohydrate degradation; L-arabinose degradation via L-ribulose; D-xylulose 5-phosphate from L-arabinose (bacterial route): step 2/3. In Anoxybacillus flavithermus (strain DSM 21510 / WK1), this protein is Ribulokinase.